The chain runs to 257 residues: UPF0246 protein Shewmr4_2963 (257 aa).

It belongs to the UPF0246 family.

This chain is UPF0246 protein Shewmr4_2963, found in Shewanella sp. (strain MR-4).